The chain runs to 321 residues: Zinc finger protein 524 (321 aa).

Polar residues-rich tracts occupy residues 1-14 and 39-48; these read MDNPSSDPLPSTLS and ATTSNRTLKS. Disordered stretches follow at residues 1-80 and 86-105; these read MDNP…DLLL and VPYTVPEGSAADGPQGSGSK. A DNA-binding region (a.T hook) is located at residues 49–59; it reads SLPRKRGRPPR. C2H2-type zinc fingers lie at residues 109–131, 137–159, 165–187, and 193–216; these read HFCPVCLRAFPYLSDLERHSISH, HVCKDCGKTFKRSSHLRRHCNIH, FRCVLCPRRFREAGELAHHHRIH, and YQCPSCRVRFTEANTLRRHYKRKH. The segment at 248–321 is disordered; the sequence is GVQEESPEGK…PGAIGHPPVD (74 aa). Residues 262–271 show a composition bias toward polar residues; sequence PISSTTSPLS. A compositionally biased stretch (gly residues) spans 274-285; it reads TAGGSAGAGRGQ.

This sequence belongs to the krueppel C2H2-type zinc-finger protein family.

It is found in the nucleus. May be involved in transcriptional regulation. The protein is Zinc finger protein 524 (Znf524) of Mus musculus (Mouse).